The sequence spans 585 residues: MEKKWKYCAVYYIIQIHFVKGVWEKTVNTEENVYATLGSDVNLTCQTQTVGFFVQMQWSKVTNKIDLIAVYHPQYGFYCAYGRPCESLVTFTETPENGSKWTLHLRNMSCSVSGRYECMLVLYPEGIQTKIYNLLIQTHVTADEWNSNHTIEIEINQTLEIPCFQNSSSKISSEFTYAWSVENSSTDSWVLLSKGIKEDNGTQETLISQNHLISNSTLLKDRVKLGTDYRLHLSPVQIFDDGRKFSCHIRVGPNKILRSSTTVKVFAKPEIPVIVENNSTDVLVERRFTCLLKNVFPKANITWFIDGSFLHDEKEGIYITNEERKGKDGFLELKSVLTRVHSNKPAQSDNLTIWCMALSPVPGNKVWNISSEKITFLLGSEISSTDPPLSVTESTLDTQPSPASSVSPARYPATSSVTLVDVSALRPNTTPQPSNSSMTTRGFNYPWTSSGTDTKKSVSRIPSETYSSSPSGAGSTLHDNVFTSTARAFSEVPTTANGSTKTNHVHITGIVVNKPKDGMSWPVIVAALLFCCMILFGLGVRKWCQYQKEIMERPPPFKPPPPPIKYTCIQEPNESDLPYHEMETL.

Positions 1 to 21 are cleaved as a signal peptide; the sequence is MEKKWKYCAVYYIIQIHFVKG. Over 22–519 the chain is Extracellular; that stretch reads VWEKTVNTEE…IVVNKPKDGM (498 aa). One can recognise an Ig-like V-type 1 domain in the interval 38-125; it reads GSDVNLTCQT…YECMLVLYPE (88 aa). 13 N-linked (GlcNAc...) asparagine glycosylation sites follow: N42, N97, N107, N148, N156, N166, N200, N215, N277, N278, N300, N350, and N368. C45 and C118 are joined by a disulfide. The Ig-like V-type 2 domain occupies 156–238; that stretch reads NQTLEIPCFQ…YRLHLSPVQI (83 aa). A disulfide bond links C163 and C247. The 107-residue stretch at 269–375 folds into the Ig-like C2-type domain; sequence PEIPVIVENN…VWNISSEKIT (107 aa). A disulfide bridge links C290 with C355. 3 stretches are compositionally biased toward polar residues: residues 385 to 418, 426 to 452, and 460 to 475; these read TDPP…SSVT, RPNT…SSGT, and RIPS…GAGS. The segment at 385 to 475 is disordered; sequence TDPPLSVTES…YSSSPSGAGS (91 aa). N-linked (GlcNAc...) asparagine glycosylation is present at N435. N497 is a glycosylation site (N-linked (GlcNAc...) asparagine). Residues 520 to 540 traverse the membrane as a helical segment; the sequence is SWPVIVAALLFCCMILFGLGV. Topologically, residues 541–585 are cytoplasmic; the sequence is RKWCQYQKEIMERPPPFKPPPPPIKYTCIQEPNESDLPYHEMETL.

As to quaternary structure, homodimer; disulfide-linked. Interacts with PVR. In terms of tissue distribution, expressed on normal T-cell lines and clones, and some transformed T-cells, but no other cultured cell lines tested. It is expressed at very low levels on activated B-cells.

It is found in the membrane. In terms of biological role, may be involved in adhesive interactions of activated T and NK cells during the late phase of the immune response. Promotes NK cell-target adhesion by interacting with PVR present on target cells. May function at a time after T and NK cells have penetrated the endothelium using integrins and selectins, when they are actively engaging diseased cells and moving within areas of inflammation. The sequence is that of T-cell surface protein tactile (CD96) from Homo sapiens (Human).